The primary structure comprises 389 residues: COP9 signalosome complex subunit 11 (389 aa).

In terms of domain architecture, PCI spans 143–312; the sequence is QLIIDIPNLV…ILYQKFDPQM (170 aa).

Component of a COP9 signalosome-like (CSN) complex.

It localises to the cytoplasm. It is found in the nucleus. In terms of biological role, component of the COP9 signalosome (CSN) complex that acts as an regulator of the ubiquitin (Ubl) conjugation pathway by mediating the deneddylation of the cullin subunit of SCF-type E3 ubiquitin-protein ligase complexes The CSN complex is involved in the regulation of the mating pheromone response. PCI8 may also be involved in transcriptional and translational control. In Kluyveromyces lactis (strain ATCC 8585 / CBS 2359 / DSM 70799 / NBRC 1267 / NRRL Y-1140 / WM37) (Yeast), this protein is COP9 signalosome complex subunit 11 (PCI8).